The following is a 250-amino-acid chain: Triosephosphate isomerase (250 aa).

Residue 9 to 11 (NWK) participates in substrate binding. H95 acts as the Electrophile in catalysis. E167 serves as the catalytic Proton acceptor. Substrate contacts are provided by residues G173, S212, and 233 to 234 (GG).

It belongs to the triosephosphate isomerase family. As to quaternary structure, homodimer.

It localises to the cytoplasm. It carries out the reaction D-glyceraldehyde 3-phosphate = dihydroxyacetone phosphate. The protein operates within carbohydrate biosynthesis; gluconeogenesis. Its pathway is carbohydrate degradation; glycolysis; D-glyceraldehyde 3-phosphate from glycerone phosphate: step 1/1. Its function is as follows. Involved in the gluconeogenesis. Catalyzes stereospecifically the conversion of dihydroxyacetone phosphate (DHAP) to D-glyceraldehyde-3-phosphate (G3P). The protein is Triosephosphate isomerase of Nitrosococcus oceani (strain ATCC 19707 / BCRC 17464 / JCM 30415 / NCIMB 11848 / C-107).